A 31-amino-acid polypeptide reads, in one-letter code: Photosystem II reaction center protein T (31 aa).

A helical transmembrane segment spans residues 3 to 23; that stretch reads SVAYIVVLTMALAVLFFAIAF.

This sequence belongs to the PsbT family. As to quaternary structure, PSII is composed of 1 copy each of membrane proteins PsbA, PsbB, PsbC, PsbD, PsbE, PsbF, PsbH, PsbI, PsbJ, PsbK, PsbL, PsbM, PsbT, PsbX, PsbY, PsbZ, Psb30/Ycf12, peripheral proteins PsbO, CyanoQ (PsbQ), PsbU, PsbV and a large number of cofactors. It forms dimeric complexes.

It is found in the cellular thylakoid membrane. Functionally, found at the monomer-monomer interface of the photosystem II (PS II) dimer, plays a role in assembly and dimerization of PSII. PSII is a light-driven water plastoquinone oxidoreductase, using light energy to abstract electrons from H(2)O, generating a proton gradient subsequently used for ATP formation. This is Photosystem II reaction center protein T from Crocosphaera subtropica (strain ATCC 51142 / BH68) (Cyanothece sp. (strain ATCC 51142)).